We begin with the raw amino-acid sequence, 240 residues long: Uridylate kinase (240 aa).

13-16 (KASG) contacts ATP. An involved in allosteric activation by GTP region spans residues 21 to 26 (GSQGFG). Position 55 (G55) interacts with UMP. Residues G56 and R60 each contribute to the ATP site. Residues D75 and 136–143 (TGNPFFTT) contribute to the UMP site. Residues T163, Q164, Y169, and D172 each contribute to the ATP site.

This sequence belongs to the UMP kinase family. In terms of assembly, homohexamer.

The protein resides in the cytoplasm. The enzyme catalyses UMP + ATP = UDP + ADP. It participates in pyrimidine metabolism; CTP biosynthesis via de novo pathway; UDP from UMP (UMPK route): step 1/1. With respect to regulation, allosterically activated by GTP. Inhibited by UTP. Functionally, catalyzes the reversible phosphorylation of UMP to UDP. In Sinorhizobium medicae (strain WSM419) (Ensifer medicae), this protein is Uridylate kinase.